Here is a 21-residue protein sequence, read N- to C-terminus: Basic phospholipase A2 BjIV (21 aa).

This sequence belongs to the phospholipase A2 family. Group II subfamily. As to quaternary structure, can form dimers, trimers and tetramers. It depends on Ca(2+) as a cofactor. In terms of processing, contains seven disulfide bonds. Expressed by the venom gland.

The protein localises to the secreted. The enzyme catalyses a 1,2-diacyl-sn-glycero-3-phosphocholine + H2O = a 1-acyl-sn-glycero-3-phosphocholine + a fatty acid + H(+). Its activity is regulated as follows. Inhibited by crotapotin. In terms of biological role, snake venom phospholipase A2 has a high enzymatic activity and produces moderate myonecrosis in skeletal muscle, but shows no neuromuscular activity in mouse phrenic nerve-diaphragm preparations. PLA2 catalyzes the calcium-dependent hydrolysis of the 2-acyl groups in 3-sn-phosphoglycerides. This chain is Basic phospholipase A2 BjIV, found in Bothrops jararacussu (Jararacussu).